A 194-amino-acid chain; its full sequence is Holliday junction branch migration complex subunit RuvA (194 aa).

Positions 1 to 64 are domain I; that stretch reads MIGRITGLLL…EDVHLLFGFM (64 aa). The tract at residues 65–140 is domain II; that stretch reads TEQERALFRQ…KIDPVAILSE (76 aa). A flexible linker region spans residues 140–143; the sequence is EAGA. The domain III stretch occupies residues 144–194; sequence AASNVDKDILSALLALGYNGREVNRALEQLSEGVTVSDGIMQSLKFLSKVK.

Belongs to the RuvA family. In terms of assembly, homotetramer. Forms an RuvA(8)-RuvB(12)-Holliday junction (HJ) complex. HJ DNA is sandwiched between 2 RuvA tetramers; dsDNA enters through RuvA and exits via RuvB. An RuvB hexamer assembles on each DNA strand where it exits the tetramer. Each RuvB hexamer is contacted by two RuvA subunits (via domain III) on 2 adjacent RuvB subunits; this complex drives branch migration. In the full resolvosome a probable DNA-RuvA(4)-RuvB(12)-RuvC(2) complex forms which resolves the HJ.

It localises to the cytoplasm. Functionally, the RuvA-RuvB-RuvC complex processes Holliday junction (HJ) DNA during genetic recombination and DNA repair, while the RuvA-RuvB complex plays an important role in the rescue of blocked DNA replication forks via replication fork reversal (RFR). RuvA specifically binds to HJ cruciform DNA, conferring on it an open structure. The RuvB hexamer acts as an ATP-dependent pump, pulling dsDNA into and through the RuvAB complex. HJ branch migration allows RuvC to scan DNA until it finds its consensus sequence, where it cleaves and resolves the cruciform DNA. In Nitrosomonas eutropha (strain DSM 101675 / C91 / Nm57), this protein is Holliday junction branch migration complex subunit RuvA.